The sequence spans 513 residues: Probable mannosyl-oligosaccharide alpha-1,2-mannosidase 1B (513 aa).

Positions 1–21 are cleaved as a signal peptide; it reads MHLSSLSLSLTALAIVSPSAA. Asn97, Asn117, Asn184, Asn251, Asn322, Asn348, and Asn368 each carry an N-linked (GlcNAc...) asparagine glycan. The cysteines at positions 334 and 363 are disulfide-linked. The active-site Proton donor is the Glu377. Thr503 serves as a coordination point for Ca(2+).

It belongs to the glycosyl hydrolase 47 family. In terms of assembly, monomer. Ca(2+) is required as a cofactor. Requires Mg(2+) as cofactor.

It localises to the cytoplasmic vesicle lumen. It carries out the reaction N(4)-(alpha-D-Man-(1-&gt;2)-alpha-D-Man-(1-&gt;2)-alpha-D-Man-(1-&gt;3)-[alpha-D-Man-(1-&gt;2)-alpha-D-Man-(1-&gt;3)-[alpha-D-Man-(1-&gt;2)-alpha-D-Man-(1-&gt;6)]-alpha-D-Man-(1-&gt;6)]-beta-D-Man-(1-&gt;4)-beta-D-GlcNAc-(1-&gt;4)-beta-D-GlcNAc)-L-asparaginyl-[protein] (N-glucan mannose isomer 9A1,2,3B1,2,3) + 4 H2O = N(4)-(alpha-D-Man-(1-&gt;3)-[alpha-D-Man-(1-&gt;3)-[alpha-D-Man-(1-&gt;6)]-alpha-D-Man-(1-&gt;6)]-beta-D-Man-(1-&gt;4)-beta-D-GlcNAc-(1-&gt;4)-beta-D-GlcNAc)-L-asparaginyl-[protein] (N-glucan mannose isomer 5A1,2) + 4 beta-D-mannose. The catalysed reaction is N(4)-(alpha-D-Man-(1-&gt;2)-alpha-D-Man-(1-&gt;2)-alpha-D-Man-(1-&gt;3)-[alpha-D-Man-(1-&gt;3)-[alpha-D-Man-(1-&gt;2)-alpha-D-Man-(1-&gt;6)]-alpha-D-Man-(1-&gt;6)]-beta-D-Man-(1-&gt;4)-beta-D-GlcNAc-(1-&gt;4)-beta-D-GlcNAc)-L-asparaginyl-[protein] (N-glucan mannose isomer 8A1,2,3B1,3) + 3 H2O = N(4)-(alpha-D-Man-(1-&gt;3)-[alpha-D-Man-(1-&gt;3)-[alpha-D-Man-(1-&gt;6)]-alpha-D-Man-(1-&gt;6)]-beta-D-Man-(1-&gt;4)-beta-D-GlcNAc-(1-&gt;4)-beta-D-GlcNAc)-L-asparaginyl-[protein] (N-glucan mannose isomer 5A1,2) + 3 beta-D-mannose. It participates in protein modification; protein glycosylation. Functionally, involved in the maturation of Asn-linked oligosaccharides. Progressively trims alpha-1,2-linked mannose residues from Man(9)GlcNAc(2) to produce Man(5)GlcNAc(2). This chain is Probable mannosyl-oligosaccharide alpha-1,2-mannosidase 1B (mns1B), found in Aspergillus niger (strain ATCC MYA-4892 / CBS 513.88 / FGSC A1513).